A 198-amino-acid chain; its full sequence is Recombination protein RecR (198 aa).

The segment at 57–72 (CDKCNTFTEAQICEVC) adopts a C4-type zinc-finger fold. Residues 80 to 175 (TLLCVVETPA…AVTRLARGVP (96 aa)) enclose the Toprim domain.

The protein belongs to the RecR family.

In terms of biological role, may play a role in DNA repair. It seems to be involved in an RecBC-independent recombinational process of DNA repair. It may act with RecF and RecO. This is Recombination protein RecR from Burkholderia multivorans (strain ATCC 17616 / 249).